The primary structure comprises 398 residues: MTRTDTRSYPFGDPVALDLHPGYAPLRAEQPALRVRLPYGEDCWLVTRHEDVKAVLSDSRFSRARAAGREETPRVTPEAAPAGSMLSMDPPEHSRLRKLIARAFTSRRVREFRPRTQEIVDGLLDQVEQAGAPADLVAGLALPLPVSVISQMLGVPTEDHYRFRDFSATVLSTTAHTREEIVAARAALEEYLGELADQRRREPGEDLMSALVAAHDDDRLTDRELTQTGITLLVGGHESTASQFACSVYLLLERPERWALLRDNPELVPTAVEELLRFIPLGSGGAFARIATEDVEVGGVLVRAGEAVVASTNSANRDDRVFTDPDVLDLAREHNPHLAFGGGVHVCLGAQLARGELQVALTSLLTRFPGLRLAVPPEQVPWRQGSLLRSPVELPVTW.

The interval 63-90 (RARAAGREETPRVTPEAAPAGSMLSMDP) is disordered. Residues His-93, Arg-97, Arg-289, His-345, and Cys-347 each contribute to the heme site.

This sequence belongs to the cytochrome P450 family. Heme serves as cofactor.

It catalyses the reaction nocardicin C + 4 reduced [2Fe-2S]-[ferredoxin] + 2 O2 + 2 H(+) = nocardicin A + 4 oxidized [2Fe-2S]-[ferredoxin] + 3 H2O. The protein operates within antibiotic biosynthesis. Its function is as follows. Involved in the biosynthesis of the beta-lactam antibiotic nocardicin A. Catalyzes the conversion of nocardicin C to nocardicin A. Cannot use nocardicin G. The chain is Nocardicin C N-oxygenase from Nocardia uniformis subsp. tsuyamanensis.